Reading from the N-terminus, the 406-residue chain is Tryptophan synthase beta chain (406 aa).

Position 99 is an N6-(pyridoxal phosphate)lysine (Lys-99).

This sequence belongs to the TrpB family. As to quaternary structure, tetramer of two alpha and two beta chains. Pyridoxal 5'-phosphate is required as a cofactor.

It carries out the reaction (1S,2R)-1-C-(indol-3-yl)glycerol 3-phosphate + L-serine = D-glyceraldehyde 3-phosphate + L-tryptophan + H2O. It functions in the pathway amino-acid biosynthesis; L-tryptophan biosynthesis; L-tryptophan from chorismate: step 5/5. In terms of biological role, the beta subunit is responsible for the synthesis of L-tryptophan from indole and L-serine. The sequence is that of Tryptophan synthase beta chain from Allorhizobium ampelinum (strain ATCC BAA-846 / DSM 112012 / S4) (Agrobacterium vitis (strain S4)).